Reading from the N-terminus, the 341-residue chain is Brain-specific homeobox/POU domain protein 3 (341 aa).

Positions 55–65 match the POU-IV box motif; that stretch reads RGAEALAAVDI. The region spanning 182 to 259 is the POU-specific domain; the sequence is ETETDPRELE…ILEAWLEEAE (78 aa). Residues 277–336 constitute a DNA-binding region (homeobox); sequence KKRKRTSIAAPEKRSLEAYFAVQPRPSSEKIAAIAEKLDLKKNVVRVWFCNQRQKQKRMK.

This sequence belongs to the POU transcription factor family. Class-4 subfamily.

The protein localises to the nucleus. In terms of biological role, may play a role in specifying terminally differentiated neuronal phenotypes. The protein is Brain-specific homeobox/POU domain protein 3 (BRN3) of Gallus gallus (Chicken).